The sequence spans 149 residues: Protein AE7-like 2 (149 aa).

Belongs to the MIP18 family.

In terms of biological role, may play a role in chromosome segregation through establishment of sister chromatid cohesion. Unable to complement ae7 mutants, and thus probably not involved in the cytosolic iron-sulfur assembly (CIA) pathway. In Arabidopsis thaliana (Mouse-ear cress), this protein is Protein AE7-like 2.